The chain runs to 208 residues: Uracil phosphoribosyltransferase (208 aa).

5-phospho-alpha-D-ribose 1-diphosphate is bound by residues Arg-78, Arg-103, and 130–138 (DPMLATGGS). Uracil contacts are provided by residues Ile-193 and 198–200 (GDA). Asp-199 serves as a coordination point for 5-phospho-alpha-D-ribose 1-diphosphate.

The protein belongs to the UPRTase family. It depends on Mg(2+) as a cofactor.

It catalyses the reaction UMP + diphosphate = 5-phospho-alpha-D-ribose 1-diphosphate + uracil. It functions in the pathway pyrimidine metabolism; UMP biosynthesis via salvage pathway; UMP from uracil: step 1/1. Its activity is regulated as follows. Allosterically activated by GTP. In terms of biological role, catalyzes the conversion of uracil and 5-phospho-alpha-D-ribose 1-diphosphate (PRPP) to UMP and diphosphate. The polypeptide is Uracil phosphoribosyltransferase (Escherichia coli O139:H28 (strain E24377A / ETEC)).